A 398-amino-acid chain; its full sequence is MSEKLWEKGYTVDEEVEKFTVGDDYIVDMRIIKYDIKASIVHSKMLQRTGLLTQEEQKKIEEALNELLHLVEEGKFQIKPEDEDCHTAIENFLVKKLGETGKKIHTARSRNDQVLTALRLMYKDELKKIKDLVVELQKSLDGFIERFGQIKFAGFTHTRKAMPTDFATWAGALRDALQDDLKLLETVYDIIDQSPLGTGAGYGVPIEVDREFTAKELGFSRVQWNPIYTQNSRGKFEYLLLHVLSQISYDLNRFASDIIFFSLPEIGFLKLPKELCTGSSIMPHKINPDPLELVRAYHHFVVSRMVMAVSLPSNLILGYHRDLQLLKKPVIESIDVVKNILRIMKIIFDRIEVDREKSEDSITEEVLATHRVYELVKKGIPFRDAYRMVAEKYGREKD.

Belongs to the lyase 1 family. Argininosuccinate lyase subfamily.

It localises to the cytoplasm. It carries out the reaction 2-(N(omega)-L-arginino)succinate = fumarate + L-arginine. The protein operates within amino-acid biosynthesis; L-arginine biosynthesis; L-arginine from L-ornithine and carbamoyl phosphate: step 3/3. In Thermotoga neapolitana (strain ATCC 49049 / DSM 4359 / NBRC 107923 / NS-E), this protein is Argininosuccinate lyase.